The chain runs to 214 residues: MKIKLAFAVLLALCLSLSVMPVLAEQAATRADLARYYDDVTSLQGRFTQQTHDESGRILEESSGEFWIERPDRFRWNYAEPWPQEIVSDGERLWVYDQDLDQVTVRSLADSLGRGPATLLGGTLGELEEAFELTFPEPGRVALQPREATLDYEHVLLRLEDGVPVELELEDGLGQITVLRLEALERDVEIDPGRFEFQPPEGADVIEAGGGRTL.

The signal sequence occupies residues 1–24 (MKIKLAFAVLLALCLSLSVMPVLA).

This sequence belongs to the LolA family. Monomer.

It is found in the periplasm. Participates in the translocation of lipoproteins from the inner membrane to the outer membrane. Only forms a complex with a lipoprotein if the residue after the N-terminal Cys is not an aspartate (The Asp acts as a targeting signal to indicate that the lipoprotein should stay in the inner membrane). The sequence is that of Outer-membrane lipoprotein carrier protein from Alkalilimnicola ehrlichii (strain ATCC BAA-1101 / DSM 17681 / MLHE-1).